The primary structure comprises 289 residues: Energy-coupling factor transporter ATP-binding protein EcfA2 (289 aa).

Residues 7–251 enclose the ABC transporter domain; the sequence is IILDNVSYTY…IELLTKIEID (245 aa). 44–51 contacts ATP; that stretch reads GTTGSGKS.

Belongs to the ABC transporter superfamily. Energy-coupling factor EcfA family. As to quaternary structure, forms a stable energy-coupling factor (ECF) transporter complex composed of 2 membrane-embedded substrate-binding proteins (S component), 2 ATP-binding proteins (A component) and 2 transmembrane proteins (T component).

It is found in the cell membrane. Its function is as follows. ATP-binding (A) component of a common energy-coupling factor (ECF) ABC-transporter complex. Unlike classic ABC transporters this ECF transporter provides the energy necessary to transport a number of different substrates. The chain is Energy-coupling factor transporter ATP-binding protein EcfA2 from Mycoplasma capricolum subsp. capricolum (strain California kid / ATCC 27343 / NCTC 10154).